A 488-amino-acid chain; its full sequence is MIPVVALVGRPNVGKSTLFNRLTRTRDALVADFPGLTRDRKYCRAEWEGHEFIVIDTGGIDGTEEGVETRMAGQSLVAIEEADIVLFMVDGRAGLMAADKGIARHLRSREKTTVIVANKTDGIDADSAVGDFYSLGMGEIVPIAASHGRGINSLLEQVLLPLVSDGLAEAEDEFAPWPDDEAEVLAREEEEEPFDPQSLPIKLAIVGRPNVGKSTLTNRILGEERVVVYDMPGTTRDSIYIPMVRDEREYVLIDTAGVRKRGKVTETVEKFSVIKTLQAIEDANVVLLVIDAREGISDQDLSLLGFILNSGRSLVIAVNKWDGLSSETRDEVKEALDHRLGFIDFARVHFISALHGSGVGNLFESVNEAYQCATKRVSTALLTRIMRMAVDEHQPPLVRGRRVKPKYAHAGGYNPPIVVIHGTQVKDLPDTYKRYLMNYFRRSLGIMGTPIRIQFNEGANPFAGRRNTLTPTQLRKRKRLMSHIKKNK.

EngA-type G domains lie at 3 to 166 (PVVA…VSDG) and 201 to 374 (IKLA…QCAT). GTP is bound by residues 9–16 (GRPNVGKS), 56–60 (DTGGI), 118–121 (NKTD), 207–214 (GRPNVGKS), 254–258 (DTAGV), and 319–322 (NKWD). Positions 375-459 (KRVSTALLTR…PIRIQFNEGA (85 aa)) constitute a KH-like domain.

This sequence belongs to the TRAFAC class TrmE-Era-EngA-EngB-Septin-like GTPase superfamily. EngA (Der) GTPase family. Associates with the 50S ribosomal subunit.

Its function is as follows. GTPase that plays an essential role in the late steps of ribosome biogenesis. The sequence is that of GTPase Der from Sodalis glossinidius (strain morsitans).